We begin with the raw amino-acid sequence, 427 residues long: 3-phosphoshikimate 1-carboxyvinyltransferase (427 aa).

3-phosphoshikimate contacts are provided by Lys20, Ser21, and Arg25. Lys20 serves as a coordination point for phosphoenolpyruvate. Residues Gly92 and Arg120 each coordinate phosphoenolpyruvate. Positions 166, 168, 312, and 339 each coordinate 3-phosphoshikimate. Residue Gln168 participates in phosphoenolpyruvate binding. The Proton acceptor role is filled by Asp312. Phosphoenolpyruvate is bound by residues Arg343 and Arg385.

This sequence belongs to the EPSP synthase family. In terms of assembly, monomer.

It is found in the cytoplasm. It carries out the reaction 3-phosphoshikimate + phosphoenolpyruvate = 5-O-(1-carboxyvinyl)-3-phosphoshikimate + phosphate. It functions in the pathway metabolic intermediate biosynthesis; chorismate biosynthesis; chorismate from D-erythrose 4-phosphate and phosphoenolpyruvate: step 6/7. Functionally, catalyzes the transfer of the enolpyruvyl moiety of phosphoenolpyruvate (PEP) to the 5-hydroxyl of shikimate-3-phosphate (S3P) to produce enolpyruvyl shikimate-3-phosphate and inorganic phosphate. This is 3-phosphoshikimate 1-carboxyvinyltransferase from Streptococcus thermophilus (strain CNRZ 1066).